Consider the following 325-residue polypeptide: Fructose-1,6-bisphosphatase class 1 (325 aa).

Mg(2+) contacts are provided by glutamate 84, aspartate 103, leucine 105, and aspartate 106. Substrate-binding positions include aspartate 106–serine 109, asparagine 196, and lysine 262. Glutamate 268 contacts Mg(2+).

This sequence belongs to the FBPase class 1 family. Homotetramer. Requires Mg(2+) as cofactor.

Its subcellular location is the cytoplasm. The catalysed reaction is beta-D-fructose 1,6-bisphosphate + H2O = beta-D-fructose 6-phosphate + phosphate. The protein operates within carbohydrate biosynthesis; gluconeogenesis. The chain is Fructose-1,6-bisphosphatase class 1 from Shewanella oneidensis (strain ATCC 700550 / JCM 31522 / CIP 106686 / LMG 19005 / NCIMB 14063 / MR-1).